We begin with the raw amino-acid sequence, 157 residues long: Endoribonuclease YbeY (157 aa).

Residues His122, His126, and His132 each coordinate Zn(2+).

This sequence belongs to the endoribonuclease YbeY family. The cofactor is Zn(2+).

The protein localises to the cytoplasm. Single strand-specific metallo-endoribonuclease involved in late-stage 70S ribosome quality control and in maturation of the 3' terminus of the 16S rRNA. This is Endoribonuclease YbeY from Bacillus velezensis (strain DSM 23117 / BGSC 10A6 / LMG 26770 / FZB42) (Bacillus amyloliquefaciens subsp. plantarum).